The chain runs to 221 residues: Translation initiation factor 6 (221 aa).

Belongs to the eIF-6 family.

Binds to the 50S ribosomal subunit and prevents its association with the 30S ribosomal subunit to form the 70S initiation complex. The polypeptide is Translation initiation factor 6 (Methanopyrus kandleri (strain AV19 / DSM 6324 / JCM 9639 / NBRC 100938)).